Here is a 1163-residue protein sequence, read N- to C-terminus: Type IV pilus biogenesis factor PilY1 (1163 aa).

The first 30 residues, 1–30, serve as a signal peptide directing secretion; the sequence is MKSALHQIGKTSLAAALSGAVLLSAQTTHA. Residues 329 to 352 form a disordered region; it reads SVGNADSTSRSLPDGKSYSSQTPY. Asp-600, Asp-602, Asn-604, and Asp-608 together coordinate Ca(2+). Residues 619 to 621 are integrin-binding motif RGD; the sequence is RGD. Ca(2+) is bound by residues Asp-851, Asn-853, Asp-855, Val-857, and Asp-859. The segment at 1138–1163 is disordered; the sequence is SGECLTVNPGPNTRGRQNWRPIEGKN.

Belongs to the PilY1 family. Interacts (via C-terminal 532-1163) with host integrins alpha-V/beta-3 (ITGAV/ITGB3) and alpha-V/beta-5 (ITGAV/ITGB5).

The protein resides in the fimbrium. It localises to the membrane. It is found in the cytoplasm. Its subcellular location is the cytosol. Involved in pilus assembly, twitching motility and adhesion to host cells. Primes type IV pili (T4P) assembly and is required for inclusion of minor pilins PilV, PilW and PilX to the surface pili. Stabilizes assembled pilus fibers likely by antagonizing retraction mediated by PilT. Calcium-binding and calcium release by PilY1 seem to be essential for twitching motility and for regulation of pilus retraction dynamics of PilT. Adhesin for human tissue specifically recognizing a host receptor localized or enriched on basolateral epithelial cell surfaces. Binds host integrins in an calcium-dependent manner in vitro and this interaction may be employed by the bacterium to mediate host epithelial cell binding in vivo. The sequence is that of Type IV pilus biogenesis factor PilY1 from Pseudomonas aeruginosa (strain PAK).